The following is a 190-amino-acid chain: Nucleoside triphosphate pyrophosphatase (190 aa).

Asp-69 functions as the Proton acceptor in the catalytic mechanism.

This sequence belongs to the Maf family. The cofactor is a divalent metal cation.

Its subcellular location is the cytoplasm. It carries out the reaction a ribonucleoside 5'-triphosphate + H2O = a ribonucleoside 5'-phosphate + diphosphate + H(+). The catalysed reaction is a 2'-deoxyribonucleoside 5'-triphosphate + H2O = a 2'-deoxyribonucleoside 5'-phosphate + diphosphate + H(+). Nucleoside triphosphate pyrophosphatase. May have a dual role in cell division arrest and in preventing the incorporation of modified nucleotides into cellular nucleic acids. This Helicobacter pylori (strain J99 / ATCC 700824) (Campylobacter pylori J99) protein is Nucleoside triphosphate pyrophosphatase.